Reading from the N-terminus, the 324-residue chain is Methionyl-tRNA formyltransferase (324 aa).

(6S)-5,6,7,8-tetrahydrofolate is bound at residue 109–112 (SILP).

The protein belongs to the Fmt family.

It catalyses the reaction L-methionyl-tRNA(fMet) + (6R)-10-formyltetrahydrofolate = N-formyl-L-methionyl-tRNA(fMet) + (6S)-5,6,7,8-tetrahydrofolate + H(+). In terms of biological role, attaches a formyl group to the free amino group of methionyl-tRNA(fMet). The formyl group appears to play a dual role in the initiator identity of N-formylmethionyl-tRNA by promoting its recognition by IF2 and preventing the misappropriation of this tRNA by the elongation apparatus. In Acidothermus cellulolyticus (strain ATCC 43068 / DSM 8971 / 11B), this protein is Methionyl-tRNA formyltransferase.